Consider the following 524-residue polypeptide: Protein-export membrane protein SecD (524 aa).

The next 6 helical transmembrane spans lie at 10-30 (VIFLVAAILLSTFALFSPTMG), 366-386 (KFDSLITGIVAVLAVAGVVFI), 389-409 (GKPQVALPMIVTGLSEVYILL), 420-442 (DLSVIAGFIAVIGTGVDDLIIIA), 465-485 (FWVIGAAAATTIIAMSPLAVL), and 487-507 (LGDLQGFAIFTILGVIVGVLV).

Belongs to the SecD/SecF family. SecD subfamily. As to quaternary structure, part of the protein translocation apparatus. Forms a homodimer and complexes with SecF.

It is found in the cell membrane. Functionally, involved in protein export. In Haloferax volcanii (strain ATCC 29605 / DSM 3757 / JCM 8879 / NBRC 14742 / NCIMB 2012 / VKM B-1768 / DS2) (Halobacterium volcanii), this protein is Protein-export membrane protein SecD.